Here is a 72-residue protein sequence, read N- to C-terminus: Large ribosomal subunit protein bL28 (72 aa).

This sequence belongs to the bacterial ribosomal protein bL28 family.

In Chlorobium luteolum (strain DSM 273 / BCRC 81028 / 2530) (Pelodictyon luteolum), this protein is Large ribosomal subunit protein bL28.